We begin with the raw amino-acid sequence, 95 residues long: Small ribosomal subunit protein bS6 (95 aa).

Belongs to the bacterial ribosomal protein bS6 family.

Functionally, binds together with bS18 to 16S ribosomal RNA. The chain is Small ribosomal subunit protein bS6 from Exiguobacterium sp. (strain ATCC BAA-1283 / AT1b).